Consider the following 214-residue polypeptide: MSSITLALSKGRIFEETLPLLAAAGITPTDNPESSRKLIIGTNRPEVRLVIVRATDTPTYVQYGAADLGIAGKDVLIEHGGAGLYQPLDLNIARCRLCVAVRKGFDYAAATRPGGRIRVATKYINSAKAHFAGKGMHVDLIKLYGSMELAPLVGLADAIVDLVSTGSTLRANNLEEVEDIAPISSRLIVNQASLKLKRELIQPVLDAFAGAIKP.

Belongs to the ATP phosphoribosyltransferase family. Short subfamily. As to quaternary structure, heteromultimer composed of HisG and HisZ subunits.

It is found in the cytoplasm. The enzyme catalyses 1-(5-phospho-beta-D-ribosyl)-ATP + diphosphate = 5-phospho-alpha-D-ribose 1-diphosphate + ATP. It participates in amino-acid biosynthesis; L-histidine biosynthesis; L-histidine from 5-phospho-alpha-D-ribose 1-diphosphate: step 1/9. In terms of biological role, catalyzes the condensation of ATP and 5-phosphoribose 1-diphosphate to form N'-(5'-phosphoribosyl)-ATP (PR-ATP). Has a crucial role in the pathway because the rate of histidine biosynthesis seems to be controlled primarily by regulation of HisG enzymatic activity. The polypeptide is ATP phosphoribosyltransferase (Azoarcus sp. (strain BH72)).